The sequence spans 90 residues: Small ribosomal subunit protein bS16 (90 aa).

It belongs to the bacterial ribosomal protein bS16 family.

The protein is Small ribosomal subunit protein bS16 of Lactococcus lactis subsp. cremoris (strain SK11).